The chain runs to 146 residues: Snake venom vascular endothelial growth factor toxin (146 aa).

An N-terminal signal peptide occupies residues 1 to 24 (MAVYLLAVAILFCIQGWPLGTVQG). Pyrrolidone carboxylic acid is present on glutamine 25. 3 disulfide bridges follow: cysteine 38/cysteine 80, cysteine 69/cysteine 115, and cysteine 73/cysteine 117. The tract at residues 118–146 (RPRSASGVNSRKHKRNPEEGEPRAKFPFV) is disordered. Positions 133-146 (NPEEGEPRAKFPFV) are enriched in basic and acidic residues.

This sequence belongs to the PDGF/VEGF growth factor family. Snake venom VEGF subfamily. Homodimer; disulfide-linked. Interacts with VEGF receptor-1 (FLT1) with a high affinity, whereas it binds to VEGF receptor-2 (KDR) with a low affinity. Does not bind VEGF receptor-3 (FLT4). In terms of tissue distribution, expressed by the venom gland.

Its subcellular location is the secreted. Functionally, snake venom VEGFs that may contribute to venom dispersion and prey subjugation by inducing vascular permeability and hypotension. This protein induces an increase in capillary permeability after intradermal injection, as well as a drastic hypotensive effect after intravenous injection. The hypotension is mediated by nitric oxide (NO), which is produced by VEGF-activated endothelium NO synthase. Also induces angiogenesis in vitro. Like other crotalid VEGFs, this protein interacts with VEGF receptor-1 (FLT1) with a high affinity, whereas it binds to VEGF receptor-2 (KDR) with a low affinity. The polypeptide is Snake venom vascular endothelial growth factor toxin (Bothrops jararaca (Jararaca)).